The primary structure comprises 363 residues: Glycerol-3-phosphate dehydrogenase [NAD(+)], cytoplasmic (363 aa).

Residues 11 to 16 (GSGNWG), phenylalanine 98, lysine 121, and alanine 155 each bind NAD(+). Residue lysine 121 coordinates substrate. Lysine 206 acts as the Proton acceptor in catalysis. Arginine 270 and glutamine 299 together coordinate NAD(+). 270–271 (RN) provides a ligand contact to substrate.

It belongs to the NAD-dependent glycerol-3-phosphate dehydrogenase family. In terms of assembly, homodimer. As to expression, isoform GPDH-1 is predominant in thorax and isoform GPDH-3 in abdomen.

It localises to the cytoplasm. It catalyses the reaction sn-glycerol 3-phosphate + NAD(+) = dihydroxyacetone phosphate + NADH + H(+). It participates in phospholipid metabolism; alpha-glycerophosphate cycle. This is Glycerol-3-phosphate dehydrogenase [NAD(+)], cytoplasmic from Drosophila melanogaster (Fruit fly).